A 74-amino-acid chain; its full sequence is Salivary glue protein Sgs-7 (74 aa).

The first 23 residues, 1–23 (MKLIAVTIIACILLIGFSDLALG), serve as a signal peptide directing secretion.

The chain is Salivary glue protein Sgs-7 (Sgs7) from Drosophila melanogaster (Fruit fly).